The chain runs to 81 residues: Acyl carrier protein (81 aa).

Residues 2–80 form the Carrier domain; the sequence is SKVDNIEQKV…DVVNYIKEHK (79 aa). Serine 40 is modified (O-(pantetheine 4'-phosphoryl)serine).

The protein belongs to the acyl carrier protein (ACP) family. 4'-phosphopantetheine is transferred from CoA to a specific serine of apo-ACP by AcpS. This modification is essential for activity because fatty acids are bound in thioester linkage to the sulfhydryl of the prosthetic group.

The protein resides in the cytoplasm. It participates in lipid metabolism; fatty acid biosynthesis. In terms of biological role, carrier of the growing fatty acid chain in fatty acid biosynthesis. The polypeptide is Acyl carrier protein (Rickettsia bellii (strain OSU 85-389)).